Here is a 229-residue protein sequence, read N- to C-terminus: Type III pantothenate kinase (229 aa).

7-14 serves as a coordination point for ATP; that stretch reads DVGNSSVD. Residues Tyr78 and 85 to 88 each bind substrate; that span reads GTDR. The active-site Proton acceptor is Asp87. Residue Thr110 participates in ATP binding. Thr161 lines the substrate pocket.

It belongs to the type III pantothenate kinase family. In terms of assembly, homodimer. NH4(+) is required as a cofactor. The cofactor is K(+).

The protein resides in the cytoplasm. The enzyme catalyses (R)-pantothenate + ATP = (R)-4'-phosphopantothenate + ADP + H(+). It participates in cofactor biosynthesis; coenzyme A biosynthesis; CoA from (R)-pantothenate: step 1/5. Functionally, catalyzes the phosphorylation of pantothenate (Pan), the first step in CoA biosynthesis. This Aquifex aeolicus (strain VF5) protein is Type III pantothenate kinase.